Here is a 322-residue protein sequence, read N- to C-terminus: Acetyl-coenzyme A carboxylase carboxyl transferase subunit beta (322 aa).

The region spanning 24 to 293 (LWIKCPDTGQ…PAVEEPAVVD (270 aa)) is the CoA carboxyltransferase N-terminal domain.

Belongs to the AccD/PCCB family. In terms of assembly, acetyl-CoA carboxylase is a heterohexamer composed of biotin carboxyl carrier protein (AccB), biotin carboxylase (AccC) and two subunits each of ACCase subunit alpha (AccA) and ACCase subunit beta (AccD).

The protein resides in the cytoplasm. The catalysed reaction is N(6)-carboxybiotinyl-L-lysyl-[protein] + acetyl-CoA = N(6)-biotinyl-L-lysyl-[protein] + malonyl-CoA. It participates in lipid metabolism; malonyl-CoA biosynthesis; malonyl-CoA from acetyl-CoA: step 1/1. Component of the acetyl coenzyme A carboxylase (ACC) complex. Biotin carboxylase (BC) catalyzes the carboxylation of biotin on its carrier protein (BCCP) and then the CO(2) group is transferred by the transcarboxylase to acetyl-CoA to form malonyl-CoA. This Rhodopseudomonas palustris (strain HaA2) protein is Acetyl-coenzyme A carboxylase carboxyl transferase subunit beta.